We begin with the raw amino-acid sequence, 138 residues long: Large ribosomal subunit protein uL16 (138 aa).

Residues 1–16 (MLIPKRVKYRRQHRPT) are compositionally biased toward basic residues. The interval 1-23 (MLIPKRVKYRRQHRPTRSGVSKG) is disordered.

The protein belongs to the universal ribosomal protein uL16 family. Part of the 50S ribosomal subunit.

In terms of biological role, binds 23S rRNA and is also seen to make contacts with the A and possibly P site tRNAs. The chain is Large ribosomal subunit protein uL16 from Corynebacterium aurimucosum (strain ATCC 700975 / DSM 44827 / CIP 107346 / CN-1) (Corynebacterium nigricans).